The chain runs to 470 residues: Glutamate--tRNA ligase (470 aa).

The 'HIGH' region motif lies at 9–19; the sequence is PSPTGYLHVGG. Positions 236–240 match the 'KMSKS' region motif; sequence RLSKR. Lysine 239 provides a ligand contact to ATP.

The protein belongs to the class-I aminoacyl-tRNA synthetase family. Glutamate--tRNA ligase type 1 subfamily. As to quaternary structure, monomer.

It localises to the cytoplasm. The enzyme catalyses tRNA(Glu) + L-glutamate + ATP = L-glutamyl-tRNA(Glu) + AMP + diphosphate. In terms of biological role, catalyzes the attachment of glutamate to tRNA(Glu) in a two-step reaction: glutamate is first activated by ATP to form Glu-AMP and then transferred to the acceptor end of tRNA(Glu). The chain is Glutamate--tRNA ligase from Colwellia psychrerythraea (strain 34H / ATCC BAA-681) (Vibrio psychroerythus).